Consider the following 68-residue polypeptide: Large ribosomal subunit protein bL33c (68 aa).

Belongs to the bacterial ribosomal protein bL33 family.

The protein resides in the plastid. Its subcellular location is the chloroplast. The chain is Large ribosomal subunit protein bL33c from Amborella trichopoda.